The chain runs to 104 residues: Phosphoribosyl-ATP pyrophosphatase (104 aa).

Belongs to the PRA-PH family.

The protein localises to the cytoplasm. It carries out the reaction 1-(5-phospho-beta-D-ribosyl)-ATP + H2O = 1-(5-phospho-beta-D-ribosyl)-5'-AMP + diphosphate + H(+). Its pathway is amino-acid biosynthesis; L-histidine biosynthesis; L-histidine from 5-phospho-alpha-D-ribose 1-diphosphate: step 2/9. The chain is Phosphoribosyl-ATP pyrophosphatase from Erythrobacter litoralis (strain HTCC2594).